The primary structure comprises 504 residues: Maturase K (504 aa).

It belongs to the intron maturase 2 family. MatK subfamily.

Its subcellular location is the plastid. It localises to the chloroplast. Its function is as follows. Usually encoded in the trnK tRNA gene intron. Probably assists in splicing its own and other chloroplast group II introns. In Prionotes cerinthoides (Climbing heath), this protein is Maturase K.